The following is a 40-amino-acid chain: Photosystem II reaction center protein L (40 aa).

The helical transmembrane segment at 19 to 39 (SLYWGLLLIFVLAVLFSNYFF) threads the bilayer.

This sequence belongs to the PsbL family. In terms of assembly, PSII is composed of 1 copy each of membrane proteins PsbA, PsbB, PsbC, PsbD, PsbE, PsbF, PsbH, PsbI, PsbJ, PsbK, PsbL, PsbM, PsbT, PsbX, PsbY, PsbZ, Psb30/Ycf12, at least 3 peripheral proteins of the oxygen-evolving complex and a large number of cofactors. It forms dimeric complexes.

It localises to the plastid. The protein resides in the chloroplast thylakoid membrane. Functionally, one of the components of the core complex of photosystem II (PSII). PSII is a light-driven water:plastoquinone oxidoreductase that uses light energy to abstract electrons from H(2)O, generating O(2) and a proton gradient subsequently used for ATP formation. It consists of a core antenna complex that captures photons, and an electron transfer chain that converts photonic excitation into a charge separation. This subunit is found at the monomer-monomer interface and is required for correct PSII assembly and/or dimerization. This is Photosystem II reaction center protein L from Nandina domestica (Heavenly bamboo).